A 554-amino-acid chain; its full sequence is NADH-ubiquinone oxidoreductase chain 5 (554 aa).

A run of 15 helical transmembrane segments spans residues V6–L26, L57–Y77, I93–L113, I150–Y170, F175–L197, S209–V228, Y238–L258, V263–S283, L286–G306, S332–Y352, I379–M399, I409–F429, L441–F461, F480–T500, and L532–I552.

It belongs to the complex I subunit 5 family.

It localises to the mitochondrion inner membrane. It carries out the reaction a ubiquinone + NADH + 5 H(+)(in) = a ubiquinol + NAD(+) + 4 H(+)(out). In terms of biological role, core subunit of the mitochondrial membrane respiratory chain NADH dehydrogenase (Complex I) that is believed to belong to the minimal assembly required for catalysis. Complex I functions in the transfer of electrons from NADH to the respiratory chain. The immediate electron acceptor for the enzyme is believed to be ubiquinone. The sequence is that of NADH-ubiquinone oxidoreductase chain 5 (ND5) from Apis mellifera ligustica (Common honeybee).